Reading from the N-terminus, the 51-residue chain is Large ribosomal subunit protein eL39 (51 aa).

The protein belongs to the eukaryotic ribosomal protein eL39 family.

The chain is Large ribosomal subunit protein eL39 (rpl39e) from Aeropyrum pernix (strain ATCC 700893 / DSM 11879 / JCM 9820 / NBRC 100138 / K1).